The following is an 89-amino-acid chain: Large ribosomal subunit protein bL27 (89 aa).

The tract at residues 1–21 is disordered; sequence MAHKKAGGSSRNGRDSAGRRL.

The protein belongs to the bacterial ribosomal protein bL27 family.

This Novosphingobium aromaticivorans (strain ATCC 700278 / DSM 12444 / CCUG 56034 / CIP 105152 / NBRC 16084 / F199) protein is Large ribosomal subunit protein bL27.